Reading from the N-terminus, the 25-residue chain is Neuromedin-U-25 (25 aa).

The residue at position 18 (glutamine 18) is a Pyrrolidone carboxylic acid. Asparagine 25 carries the asparagine amide modification.

This sequence belongs to the NmU family.

It localises to the secreted. In terms of biological role, stimulates uterine smooth muscle contraction and causes selective vasoconstriction. The polypeptide is Neuromedin-U-25 (NMU) (Canis lupus familiaris (Dog)).